We begin with the raw amino-acid sequence, 234 residues long: Endonuclease V (234 aa).

Mg(2+) is bound by residues Asp46 and Asp116.

This sequence belongs to the endonuclease V family. It depends on Mg(2+) as a cofactor.

It is found in the cytoplasm. It carries out the reaction Endonucleolytic cleavage at apurinic or apyrimidinic sites to products with a 5'-phosphate.. DNA repair enzyme involved in the repair of deaminated bases. Selectively cleaves double-stranded DNA at the second phosphodiester bond 3' to a deoxyinosine leaving behind the intact lesion on the nicked DNA. The chain is Endonuclease V from Clostridium acetobutylicum (strain ATCC 824 / DSM 792 / JCM 1419 / IAM 19013 / LMG 5710 / NBRC 13948 / NRRL B-527 / VKM B-1787 / 2291 / W).